The following is a 308-amino-acid chain: Putative S-adenosyl-L-methionine-dependent methyltransferase MAB_4584c (308 aa).

S-adenosyl-L-methionine contacts are provided by residues Asp131 and 160–161 (DL).

It belongs to the UPF0677 family.

Exhibits S-adenosyl-L-methionine-dependent methyltransferase activity. In Mycobacteroides abscessus (strain ATCC 19977 / DSM 44196 / CCUG 20993 / CIP 104536 / JCM 13569 / NCTC 13031 / TMC 1543 / L948) (Mycobacterium abscessus), this protein is Putative S-adenosyl-L-methionine-dependent methyltransferase MAB_4584c.